Here is a 148-residue protein sequence, read N- to C-terminus: Deoxyuridine 5'-triphosphate nucleotidohydrolase (148 aa).

Substrate is bound by residues 65–67 (RSG), asparagine 78, 82–84 (TID), and lysine 92.

The protein belongs to the dUTPase family. The cofactor is Mg(2+).

It carries out the reaction dUTP + H2O = dUMP + diphosphate + H(+). The protein operates within pyrimidine metabolism; dUMP biosynthesis; dUMP from dCTP (dUTP route): step 2/2. Its function is as follows. This enzyme is involved in nucleotide metabolism: it produces dUMP, the immediate precursor of thymidine nucleotides and it decreases the intracellular concentration of dUTP so that uracil cannot be incorporated into DNA. This Chlorobium phaeovibrioides (strain DSM 265 / 1930) (Prosthecochloris vibrioformis (strain DSM 265)) protein is Deoxyuridine 5'-triphosphate nucleotidohydrolase.